We begin with the raw amino-acid sequence, 786 residues long: Progesterone receptor (786 aa).

The segment covering 1–10 (MTEVKSKETR) has biased composition (basic and acidic residues). Disordered regions lie at residues 1–95 (MTEV…SKDC), 110–212 (AAPW…ASPA), and 252–279 (SAFG…DGKE). A modulating, Pro-Rich region spans residues 1–420 (MTEVKSKETR…YSFESLPQKI (420 aa)). K7 is covalently cross-linked (Glycyl lysine isopeptide (Lys-Gly) (interchain with G-Cter in SUMO)). Acidic residues predominate over residues 48 to 79 (DEEEEEEENEEEEEEEEPQQREEEEEEEEEDR). Positions 143–154 (APGPSQPRPGAP) are enriched in pro residues. Basic and acidic residues predominate over residues 186 to 197 (AEERGFPERDAG). The segment covering 203–212 (LAPAAAASPA) has biased composition (low complexity). S210 and S259 each carry phosphoserine. Residue K294 forms a Glycyl lysine isopeptide (Lys-Gly) (interchain with G-Cter in SUMO); alternate linkage. A Glycyl lysine isopeptide (Lys-Gly) (interchain with G-Cter in ubiquitin); alternate cross-link involves residue K294. Residue K385 forms a Glycyl lysine isopeptide (Lys-Gly) (interchain with G-Cter in SUMO) linkage. NR C4-type zinc fingers lie at residues 421–441 (CLIC…CGSC) and 457–481 (CAGR…LRKC). A DNA-binding region (nuclear receptor) is located at residues 421-486 (CLICGDEASG…RLRKCCQAGM (66 aa)). Position 529 is a phosphoserine (S529). One can recognise an NR LBD domain in the interval 532 to 766 (QEIPFVPPMI…EFPEMMSEVI (235 aa)).

It belongs to the nuclear hormone receptor family. NR3 subfamily. Post-translationally, phosphorylation of Ser-529 is sharply increased upon progesterone treatment, whereas phosphorylation of Ser-210 and Ser-259 is modestly induced by progesterone. Ubiquitinated. Ubiquitination is increased by progesterone and represses sumoylation at the same site. In terms of processing, sumoylation is hormone-dependent and represses transcriptional activity. Sumoylation on all three sites is enhanced by PIAS3. Desumoylated by SENP1. Sumoylation on Lys-385, the main site of sumoylation, is repressed by ubiquitination on the same site. As to expression, oviduct and bursa of Fabricius.

It is found in the nucleus. The protein localises to the cytoplasm. Its function is as follows. The steroid hormones and their receptors are involved in the regulation of eukaryotic gene expression and affect cellular proliferation and differentiation in target tissues. The protein is Progesterone receptor (PGR) of Gallus gallus (Chicken).